The sequence spans 152 residues: Deoxyuridine 5'-triphosphate nucleotidohydrolase (152 aa).

Substrate is bound by residues 71–73, N84, 88–90, and M98; these read RSG and LID.

Belongs to the dUTPase family. Mg(2+) is required as a cofactor.

It carries out the reaction dUTP + H2O = dUMP + diphosphate + H(+). The protein operates within pyrimidine metabolism; dUMP biosynthesis; dUMP from dCTP (dUTP route): step 2/2. This enzyme is involved in nucleotide metabolism: it produces dUMP, the immediate precursor of thymidine nucleotides and it decreases the intracellular concentration of dUTP so that uracil cannot be incorporated into DNA. This chain is Deoxyuridine 5'-triphosphate nucleotidohydrolase, found in Klebsiella pneumoniae subsp. pneumoniae (strain ATCC 700721 / MGH 78578).